The chain runs to 21 residues: Hemolymph 65 kDa lectin BG04 (21 aa).

Hemolymph.

It is found in the secreted. Its function is as follows. Binds and precipitates antigens of the parasite Echinostoma paraensei. The sequence is that of Hemolymph 65 kDa lectin BG04 (BG04) from Biomphalaria glabrata (Bloodfluke planorb).